Reading from the N-terminus, the 350-residue chain is C5a anaphylatoxin chemotactic receptor 1 (350 aa).

Residues 1 to 37 (MDSFNYTTPDYGHYDDKDTLDPNTPVDKTSNTLRVPD) are Extracellular-facing. The required for CHIPS binding stretch occupies residues 10 to 18 (DYGHYDDKD). Sulfotyrosine is present on residues tyrosine 11 and tyrosine 14. The tract at residues 21 to 30 (DPNTPVDKTS) is involved in C5a binding. A helical transmembrane segment spans residues 38-64 (ILALVIFAVVFLVGVLGNALVVWVTAF). Over 65 to 69 (EVKRT) the chain is Cytoplasmic. Residues 70–93 (INAIWFLNLAVADFLSCLALPILF) form a helical membrane-spanning segment. Residues 94–110 (TSIVQHHHWPFGGAACR) are Extracellular-facing. A disulfide bond links cysteine 109 and cysteine 188. The chain crosses the membrane as a helical span at residues 111–132 (ILPSLILLNMYASILLLATISA). The Cytoplasmic segment spans residues 133-153 (DRFLLVFKPIWCQNFRGAGLA). Residues 154 to 174 (WIACAVAWGLALLLTIPSFLY) form a helical membrane-spanning segment. Residues 175 to 200 (RVVREEYFPPKVLCGVDYSHDKQRER) are Extracellular-facing. A helical transmembrane segment spans residues 201 to 226 (AVAVVRLVLGFLWPLLTLTICYTFIL). At 227-242 (LRTWSRRATRSTKTLK) the chain is on the cytoplasmic side. A helical membrane pass occupies residues 243–265 (VVVAVVASFFIFWLPYQVTGIMM). The Extracellular portion of the chain corresponds to 266–282 (SFLEPSSPTFLLLKKLD). Residues 283 to 303 (SLCVSFAYINCCINPIIYVVA) traverse the membrane as a helical segment. Residues 304–350 (GQGFQGRLRKSLPSLLRNVLTEESVVRESKSFTRSTVDTMAEKTQAV) are Cytoplasmic-facing. Serine 314, serine 317, serine 327, serine 332, serine 334, and serine 338 each carry phosphoserine.

Belongs to the G-protein coupled receptor 1 family. In terms of assembly, homodimer. May also form higher-order oligomers. Interacts (when phosphorylated) with ARRB1 and ARRB2; the interaction is associated with internalization of C5aR. Interacts (via N-terminal domain) with S.aureus chemotaxis inhibitory protein (CHIPS); the interaction blocks the receptor and may thus inhibit the immune response. In terms of processing, sulfation plays a critical role in the association of C5aR with C5a, but no significant role in the ability of the receptor to transduce a signal and mobilize calcium in response to a small peptide agonist. Sulfation at Tyr-14 is important for CHIPS binding. Phosphorylated on serine residues in response to C5a binding, resulting in internalization of the receptor and short-term desensitization to C5a.

The protein resides in the cell membrane. It is found in the cytoplasmic vesicle. In terms of biological role, receptor for the chemotactic and inflammatory peptide anaphylatoxin C5a. The ligand interacts with at least two sites on the receptor: a high-affinity site on the extracellular N-terminus, and a second site in the transmembrane region which activates downstream signaling events. Receptor activation stimulates chemotaxis, granule enzyme release, intracellular calcium release and superoxide anion production. The polypeptide is C5a anaphylatoxin chemotactic receptor 1 (C5AR1) (Gorilla gorilla gorilla (Western lowland gorilla)).